A 412-amino-acid chain; its full sequence is Lysosomal phospholipase A and acyltransferase (412 aa).

A signal peptide spans 1 to 33 (MDRHLCTCRETQLRSGLLLPLFLLMMLADLTLP). Residue Asp46 participates in substrate binding. Cysteines 65 and 89 form a disulfide. Asn99 carries N-linked (GlcNAc...) asparagine glycosylation. The Acyl-ester intermediate role is filled by Ser198. Ser198 provides a ligand contact to Zn(2+). Met199 contacts substrate. Residues Asn273 and Asn289 are each glycosylated (N-linked (GlcNAc...) asparagine). Cys355 serves as a coordination point for Zn(2+). Catalysis depends on charge relay system residues Asp360 and His392. His392 is a binding site for Zn(2+). Asn398 carries N-linked (GlcNAc...) asparagine glycosylation.

It belongs to the AB hydrolase superfamily. Lipase family. N-glycosylated. N-glycosylation is important for maturation of the enzyme and normal subcellular location. As to expression, detected in blood plasma. Detected in alveolar macrophages (at protein level). Detected in heart, liver, spleen, kidney, thymus, brain and lung.

The protein localises to the secreted. The protein resides in the lysosome. It is found in the membrane. The catalysed reaction is a 1,2-diacyl-sn-glycero-3-phosphocholine + H2O = a 2-acyl-sn-glycero-3-phosphocholine + a fatty acid + H(+). It carries out the reaction 1-hexadecanoyl-2-(9Z-octadecenoyl)-sn-glycero-3-phosphocholine + H2O = 2-(9Z-octadecenoyl)-sn-glycero-3-phosphocholine + hexadecanoate + H(+). The enzyme catalyses 1,2-di-(9Z-octadecenoyl)-sn-glycero-3-phosphocholine + H2O = 2-(9Z-octadecenoyl)-sn-glycero-3-phosphocholine + (9Z)-octadecenoate + H(+). It catalyses the reaction 1-hexadecanoyl-2-glutaroyl-sn-glycero-3-phosphocholine + H2O = 2-glutaroyl-sn-glycero-3-phosphocholine + hexadecanoate + H(+). The catalysed reaction is 1-hexadecanoyl-2-nonadioyl-sn-glycero-3-phosphocholine + H2O = 2-nonadioyl-sn-glycero-3-phosphocholine + hexadecanoate + H(+). It carries out the reaction 1-hexadecanoyl-2-(5-oxopentanoyl)-sn-glycero-3-phosphocholine + H2O = 2-(5-oxopentanoyl)-sn-glycero-3-phosphocholine + hexadecanoate + H(+). The enzyme catalyses 1-hexadecanoyl-2-(9-oxononanoyl)-sn-glycero-3-phosphocholine + H2O = 2-(9-oxononanoyl)-sn-glycero-3-phosphocholine + hexadecanoate + H(+). It catalyses the reaction 1,2-dihexadecanoyl-sn-glycero-3-phosphocholine + H2O = 2-hexadecanoyl-sn-glycero-3-phosphocholine + hexadecanoate + H(+). The catalysed reaction is a 1,2-diacyl-sn-glycero-3-phosphocholine + H2O = a 1-acyl-sn-glycero-3-phosphocholine + a fatty acid + H(+). It carries out the reaction 1-hexadecanoyl-2-(9Z-octadecenoyl)-sn-glycero-3-phosphocholine + H2O = 1-hexadecanoyl-sn-glycero-3-phosphocholine + (9Z)-octadecenoate + H(+). The enzyme catalyses 1,2-di-(9Z-octadecenoyl)-sn-glycero-3-phosphocholine + H2O = 1-(9Z-octadecenoyl)-sn-glycero-3-phosphocholine + (9Z)-octadecenoate + H(+). It catalyses the reaction 1,2-dihexadecanoyl-sn-glycero-3-phosphocholine + H2O = 1-hexadecanoyl-sn-glycero-3-phosphocholine + hexadecanoate + H(+). The catalysed reaction is a 1-acyl-sn-glycero-3-phosphocholine + H2O = sn-glycerol 3-phosphocholine + a fatty acid + H(+). It carries out the reaction 1-hexadecanoyl-sn-glycero-3-phosphocholine + H2O = sn-glycerol 3-phosphocholine + hexadecanoate + H(+). The enzyme catalyses N-(acetyl)-sphing-4-enine + a 1,2-diacyl-sn-glycero-3-phosphoethanolamine = 1-O-acyl-N-(acetyl)-sphing-4-enine + a 2-acyl-sn-glycero-3-phosphoethanolamine. It catalyses the reaction 1-hexadecanoyl-2-(9Z-octadecenoyl)-sn-glycero-3-phosphoethanolamine + N-(acetyl)-sphing-4-enine = 2-(9Z-octadecenoyl)-sn-glycero-3-phosphoethanolamine + 1-hexadecanoyl-N-(acetyl)-sphing-4-enine. The catalysed reaction is 1-hexadecanoyl-2-(9Z,12Z-octadecadienoyl)-sn-glycero-3-phosphoethanolamine + N-(acetyl)-sphing-4-enine = 2-(9Z,12Z)-octadecadienoyl-sn-glycero-3-phosphoethanolamine + 1-hexadecanoyl-N-(acetyl)-sphing-4-enine. It carries out the reaction 1-hexadecanoyl-2-(5Z,8Z,11Z,14Z-eicosatetraenoyl)-sn-glycero-3-phosphoethanolamine + N-(acetyl)-sphing-4-enine = 2-(5Z,8Z,11Z,14Z)-eicosatetraenoyl-sn-glycero-3-phosphoethanolamine + 1-hexadecanoyl-N-(acetyl)-sphing-4-enine. The enzyme catalyses N-(acetyl)-sphing-4-enine + a 1,2-diacyl-sn-glycero-3-phosphoethanolamine = 1-O-acyl-N-(acetyl)-sphing-4-enine + a 1-acyl-sn-glycero-3-phosphoethanolamine. It catalyses the reaction 1-hexadecanoyl-2-(9Z-octadecenoyl)-sn-glycero-3-phosphoethanolamine + N-(acetyl)-sphing-4-enine = 1-(9Z-octadecenoyl)-N-(acetyl)-sphing-4-enine + 1-hexadecanoyl-sn-glycero-3-phosphoethanolamine. The catalysed reaction is 1-hexadecanoyl-2-(9Z,12Z-octadecadienoyl)-sn-glycero-3-phosphoethanolamine + N-(acetyl)-sphing-4-enine = 1-(9Z,12Z-octadecadienoyl)-N-acetylsphing-4-enine + 1-hexadecanoyl-sn-glycero-3-phosphoethanolamine. It carries out the reaction 1-hexadecanoyl-2-(5Z,8Z,11Z,14Z-eicosatetraenoyl)-sn-glycero-3-phosphoethanolamine + N-(acetyl)-sphing-4-enine = 1-(5Z,8Z,11Z,14Z)-eicosatetraenoyl-N-(acetyl)-sphing-4-enine + 1-hexadecanoyl-sn-glycero-3-phosphoethanolamine. The enzyme catalyses N-(acetyl)-sphing-4-enine + a 1,2-diacyl-sn-glycero-3-phosphocholine = 1-O-acyl-N-(acetyl)-sphing-4-enine + a 2-acyl-sn-glycero-3-phosphocholine. It catalyses the reaction 1-hexadecanoyl-2-(9Z-octadecenoyl)-sn-glycero-3-phosphocholine + N-(acetyl)-sphing-4-enine = 1-hexadecanoyl-N-(acetyl)-sphing-4-enine + 2-(9Z-octadecenoyl)-sn-glycero-3-phosphocholine. The catalysed reaction is 1-hexadecanoyl-2-(9Z,12Z-octadecadienoyl)-sn-glycero-3-phosphocholine + N-(acetyl)-sphing-4-enine = 2-(9Z,12Z-octadecadienoyl)-sn-glycero-3-phosphocholine + 1-hexadecanoyl-N-(acetyl)-sphing-4-enine. It carries out the reaction 1-hexadecanoyl-2-(5Z,8Z,11Z,14Z-eicosatetraenoyl)-sn-glycero-3-phosphocholine + N-(acetyl)-sphing-4-enine = 1-hexadecanoyl-N-(acetyl)-sphing-4-enine + 2-(5Z,8Z,11Z,14Z)-eicosatetraenoyl-sn-glycero-3-phosphocholine. The enzyme catalyses 1-hexadecanoyl-2-(4Z,7Z,10Z,13Z,16Z,19Z-docosahexaenoyl)-sn-glycero-3-phosphocholine + N-(acetyl)-sphing-4-enine = 2-(4Z,7Z,10Z,13Z,16Z,19Z-docosahexaenoyl)-sn-glycero-3-phosphocholine + 1-hexadecanoyl-N-(acetyl)-sphing-4-enine. It catalyses the reaction 1-hexadecanoyl-2-nonadioyl-sn-glycero-3-phosphocholine + N-(acetyl)-sphing-4-enine = 2-nonadioyl-sn-glycero-3-phosphocholine + 1-hexadecanoyl-N-(acetyl)-sphing-4-enine. The catalysed reaction is 1-octadecanoyl-2-(9Z-octadecenoyl)-sn-glycero-3-phosphocholine + N-(acetyl)-sphing-4-enine = 1-octadecanoyl-N-(acetyl)-sphing-4-enine + 2-(9Z-octadecenoyl)-sn-glycero-3-phosphocholine. It carries out the reaction 1-(9Z)-octadecenoyl-2-octadecanoyl-sn-glycero-3-phosphocholine + N-(acetyl)-sphing-4-enine = 2-octadecanoyl-sn-glycero-3-phosphocholine + 1-(9Z-octadecenoyl)-N-(acetyl)-sphing-4-enine. The enzyme catalyses 1-octadecanoyl-2-(5Z,8Z,11Z,14Z-eicosatetraenoyl)-sn-glycero-3-phosphocholine + N-(acetyl)-sphing-4-enine = 1-octadecanoyl-N-(acetyl)-sphing-4-enine + 2-(5Z,8Z,11Z,14Z)-eicosatetraenoyl-sn-glycero-3-phosphocholine. It catalyses the reaction 1-(9Z-octadecenoyl)-2-hexadecanoyl-sn-glycero-3-phosphocholine + N-(acetyl)-sphing-4-enine = 1-(9Z-octadecenoyl)-N-(acetyl)-sphing-4-enine + 2-hexadecanoyl-sn-glycero-3-phosphocholine. The catalysed reaction is N-(acetyl)-sphing-4-enine + a 1,2-diacyl-sn-glycero-3-phosphocholine = 1-O-acyl-N-(acetyl)-sphing-4-enine + a 1-acyl-sn-glycero-3-phosphocholine. It carries out the reaction 1-hexadecanoyl-2-(9Z-octadecenoyl)-sn-glycero-3-phosphocholine + N-(acetyl)-sphing-4-enine = 1-(9Z-octadecenoyl)-N-(acetyl)-sphing-4-enine + 1-hexadecanoyl-sn-glycero-3-phosphocholine. The enzyme catalyses 1-hexadecanoyl-2-(9Z,12Z-octadecadienoyl)-sn-glycero-3-phosphocholine + N-(acetyl)-sphing-4-enine = 1-(9Z,12Z-octadecadienoyl)-N-acetylsphing-4-enine + 1-hexadecanoyl-sn-glycero-3-phosphocholine. It catalyses the reaction 1-hexadecanoyl-2-(5Z,8Z,11Z,14Z-eicosatetraenoyl)-sn-glycero-3-phosphocholine + N-(acetyl)-sphing-4-enine = 1-(5Z,8Z,11Z,14Z)-eicosatetraenoyl-N-(acetyl)-sphing-4-enine + 1-hexadecanoyl-sn-glycero-3-phosphocholine. The catalysed reaction is 1-hexadecanoyl-2-(4Z,7Z,10Z,13Z,16Z,19Z-docosahexaenoyl)-sn-glycero-3-phosphocholine + N-(acetyl)-sphing-4-enine = 1-(4Z,7Z,10Z,13Z,16Z,19Z-docosahexaenoyl)-N-(acetyl)-sphing-4-enine + 1-hexadecanoyl-sn-glycero-3-phosphocholine. It carries out the reaction 1-octadecanoyl-2-(9Z-octadecenoyl)-sn-glycero-3-phosphocholine + N-(acetyl)-sphing-4-enine = 1-(9Z-octadecenoyl)-N-(acetyl)-sphing-4-enine + 1-octadecanoyl-sn-glycero-3-phosphocholine. The enzyme catalyses 1-octadecanoyl-2-(9Z,12Z)-octadecadienoyl-sn-glycero-3-phosphocholine + N-(acetyl)-sphing-4-enine = 1-(9Z,12Z-octadecadienoyl)-N-acetylsphing-4-enine + 1-octadecanoyl-sn-glycero-3-phosphocholine. It catalyses the reaction 1-(9Z-octadecenoyl)-2-hexadecanoyl-sn-glycero-3-phosphocholine + N-(acetyl)-sphing-4-enine = 1-hexadecanoyl-N-(acetyl)-sphing-4-enine + 1-(9Z-octadecenoyl)-sn-glycero-3-phosphocholine. The catalysed reaction is 1-(9Z)-octadecenoyl-2-octadecanoyl-sn-glycero-3-phosphocholine + N-(acetyl)-sphing-4-enine = 1-octadecanoyl-N-(acetyl)-sphing-4-enine + 1-(9Z-octadecenoyl)-sn-glycero-3-phosphocholine. It carries out the reaction 1,2-di-(9Z-octadecenoyl)-sn-glycero-3-phosphocholine + N-(acetyl)-sphing-4-enine = 1-(9Z-octadecenoyl)-N-(acetyl)-sphing-4-enine + 1-(9Z-octadecenoyl)-sn-glycero-3-phosphocholine. The enzyme catalyses 1-octadecanoyl-2-(5Z,8Z,11Z,14Z-eicosatetraenoyl)-sn-glycero-3-phosphocholine + N-(acetyl)-sphing-4-enine = 1-(5Z,8Z,11Z,14Z)-eicosatetraenoyl-N-(acetyl)-sphing-4-enine + 1-octadecanoyl-sn-glycero-3-phosphocholine. It catalyses the reaction a 1,2-diacyl-sn-glycero-3-phospho-L-serine + N-(acetyl)-sphing-4-enine = a 2-acyl-sn-glycero-3-phospho-L-serine + 1-O-acyl-N-(acetyl)-sphing-4-enine. The catalysed reaction is 1-octadecanoyl-2-(9Z-octadecenoyl)-sn-glycero-3-phospho-L-serine + N-(acetyl)-sphing-4-enine = 2-(9Z-octadecenoyl)-sn-glycero-3-phospho-L-serine + 1-octadecanoyl-N-(acetyl)-sphing-4-enine. It carries out the reaction a 1,2-diacyl-sn-glycero-3-phospho-L-serine + N-(acetyl)-sphing-4-enine = 1-O-acyl-N-(acetyl)-sphing-4-enine + a 1-acyl-sn-glycero-3-phospho-L-serine. The enzyme catalyses 1-octadecanoyl-2-(9Z-octadecenoyl)-sn-glycero-3-phospho-L-serine + N-(acetyl)-sphing-4-enine = 1-octadecanoyl-sn-glycero-3-phosphoserine + 1-(9Z-octadecenoyl)-N-(acetyl)-sphing-4-enine. It catalyses the reaction a 1,2-diacyl-sn-glycero-3-phospho-(1'-sn-glycerol) + N-(acetyl)-sphing-4-enine = 2-acyl-sn-glycero-3-phospho-(1'-sn-glycerol) + 1-O-acyl-N-(acetyl)-sphing-4-enine. The catalysed reaction is 1-octadecanoyl-2-(9Z-octadecenoyl)-sn-glycero-3-phospho-(1'-sn-glycerol) + N-(acetyl)-sphing-4-enine = 2-(9Z-octadecenoyl)-sn-glycero-3-phospho-(1'-sn-glycerol) + 1-octadecanoyl-N-(acetyl)-sphing-4-enine. It carries out the reaction a 1,2-diacyl-sn-glycero-3-phospho-(1'-sn-glycerol) + N-(acetyl)-sphing-4-enine = 1-O-acyl-N-(acetyl)-sphing-4-enine + 1-acyl-sn-glycero-3-phospho-(1'-sn-glycerol). The enzyme catalyses 1-octadecanoyl-2-(9Z-octadecenoyl)-sn-glycero-3-phospho-(1'-sn-glycerol) + N-(acetyl)-sphing-4-enine = 1-octadecanoyl-sn-glycero-3-phospho-(1'-sn-glycerol) + 1-(9Z-octadecenoyl)-N-(acetyl)-sphing-4-enine. It catalyses the reaction an N-acylethanolamine + a 1,2-diacyl-sn-glycero-3-phosphocholine = 2-(acylamino)ethyl fatty acid + a 2-acyl-sn-glycero-3-phosphocholine. The catalysed reaction is an N-acylethanolamine + a 1,2-diacyl-sn-glycero-3-phosphocholine = 2-(acylamino)ethyl fatty acid + a 1-acyl-sn-glycero-3-phosphocholine. It carries out the reaction N-(5Z,8Z,11Z,14Z-eicosatetraenoyl)-ethanolamine + 1,2-di-(9Z-octadecenoyl)-sn-glycero-3-phosphocholine = 2-[(5Z,8Z,11Z,14Z)-eicosatetraenoylamino]ethyl (9Z)-octadecenoate + (9Z-octadecenoyl)-sn-glycero-3-phosphocholine. The enzyme catalyses N-(9Z-octadecenoyl) ethanolamine + 1,2-di-(9Z-octadecenoyl)-sn-glycero-3-phosphocholine = 2-[(9Z)-octadecenoylamino]ethyl (9Z)-octadecenoate + (9Z-octadecenoyl)-sn-glycero-3-phosphocholine. It catalyses the reaction a 3-acyl-sn-glycerol + a 1,2-diacyl-sn-glycero-3-phosphocholine = a 1,3-diacylglycerol + a 1-acyl-sn-glycero-3-phosphocholine. The catalysed reaction is a 3-acyl-sn-glycerol + a 1,2-diacyl-sn-glycero-3-phosphocholine = a 1,3-diacylglycerol + a 2-acyl-sn-glycero-3-phosphocholine. It carries out the reaction 3-(9Z-octadecenoyl)-sn-glycerol + 1,2-di-(9Z-octadecenoyl)-sn-glycero-3-phosphocholine = 1,3-di-(9Z-octadecenoyl)-glycerol + (9Z-octadecenoyl)-sn-glycero-3-phosphocholine. The enzyme catalyses 3-hexadecanoyl-sn-glycerol + 1,2-di-(9Z-octadecenoyl)-sn-glycero-3-phosphocholine = 1-(9Z)-octadecenoyl-3-hexadecanoyl-sn-glycerol + (9Z-octadecenoyl)-sn-glycero-3-phosphocholine. It catalyses the reaction a 1-acyl-sn-glycerol + a 1,2-diacyl-sn-glycero-3-phosphocholine = a 1,3-diacylglycerol + a 2-acyl-sn-glycero-3-phosphocholine. The catalysed reaction is a 1-acyl-sn-glycerol + a 1,2-diacyl-sn-glycero-3-phosphocholine = a 1,3-diacylglycerol + a 1-acyl-sn-glycero-3-phosphocholine. It carries out the reaction 1-(9Z-octadecenoyl)-sn-glycerol + 1,2-di-(9Z-octadecenoyl)-sn-glycero-3-phosphocholine = 1,3-di-(9Z-octadecenoyl)-glycerol + (9Z-octadecenoyl)-sn-glycero-3-phosphocholine. The enzyme catalyses 1-hexadecanoyl-sn-glycerol + 1,2-di-(9Z-octadecenoyl)-sn-glycero-3-phosphocholine = 1-hexadecanoyl-3-(9Z)-octadecenoyl-sn-glycerol + (9Z-octadecenoyl)-sn-glycero-3-phosphocholine. It catalyses the reaction a 2-acylglycerol + a 1,2-diacyl-sn-glycero-3-phosphocholine = a 1,2-diacylglycerol + a 2-acyl-sn-glycero-3-phosphocholine. The catalysed reaction is a 2-acylglycerol + a 1,2-diacyl-sn-glycero-3-phosphocholine = a 1,2-diacylglycerol + a 1-acyl-sn-glycero-3-phosphocholine. It carries out the reaction 2-hexadecanoylglycerol + 1,2-di-(9Z-octadecenoyl)-sn-glycero-3-phosphocholine = 1-(9Z)-octadecenoyl-2-hexadecanoylglycerol + (9Z-octadecenoyl)-sn-glycero-3-phosphocholine. The enzyme catalyses 1-O-alkylglycerol + a 1,2-diacyl-sn-glycero-3-phosphocholine = 1-O-alkyl-3-acylglycerol + a 1-acyl-sn-glycero-3-phosphocholine. It catalyses the reaction 1-O-alkylglycerol + a 1,2-diacyl-sn-glycero-3-phosphocholine = 1-O-alkyl-3-acylglycerol + a 2-acyl-sn-glycero-3-phosphocholine. The catalysed reaction is 1-O-hexadecylglycerol + 1,2-di-(9Z-octadecenoyl)-sn-glycero-3-phosphocholine = 1-O-hexadecyl-3-(9Z)-octadecenoylglycerol + (9Z-octadecenoyl)-sn-glycero-3-phosphocholine. It carries out the reaction 1-O-alkyl-2-acyl-sn-glycerol + a 1,2-diacyl-sn-glycero-3-phosphocholine = 1-O-alkyl-2,3-diacyl-sn-glycerol + a 2-acyl-sn-glycero-3-phosphocholine. The enzyme catalyses 1-O-alkyl-2-acyl-sn-glycerol + a 1,2-diacyl-sn-glycero-3-phosphocholine = 1-O-alkyl-2,3-diacyl-sn-glycerol + a 1-acyl-sn-glycero-3-phosphocholine. It catalyses the reaction 1-O-hexadecyl-2-acetyl-sn-glycerol + 1,2-di-(9Z-octadecenoyl)-sn-glycero-3-phosphocholine = 1-O-hexadecyl-2-acetyl-3-(9Z)-octadecenoyl-sn-glycerol + (9Z-octadecenoyl)-sn-glycero-3-phosphocholine. The catalysed reaction is 1-O-hexadecyl-2-O-methyl-sn-glycerol + 1,2-di-(9Z-octadecenoyl)-sn-glycero-3-phosphocholine = 1-O-hexadecyl-2-O-methyl-3-(9Z)-octadecenoyl-sn-glycerol + (9Z-octadecenoyl)-sn-glycero-3-phosphocholine. It carries out the reaction a 1,2-diacyl-sn-glycero-3-phosphoethanolamine + H2O = a 1-acyl-sn-glycero-3-phosphoethanolamine + a fatty acid + H(+). The enzyme catalyses 1-acyl-2-(5Z,8Z,11Z,14Z)-eicosatetraenoyl-sn-glycero-3-phosphoethanolamine + H2O = a 1-acyl-sn-glycero-3-phosphoethanolamine + (5Z,8Z,11Z,14Z)-eicosatetraenoate + H(+). It catalyses the reaction a 1,2-diacyl-sn-glycero-3-phospho-(1'-sn-glycerol) + H2O = 1-acyl-sn-glycero-3-phospho-(1'-sn-glycerol) + a fatty acid + H(+). The catalysed reaction is 1-hexadecanoyl-2-(9Z-octadecenoyl)-sn-glycero-3-phospho-(1'-sn-glycerol) + H2O = 1-hexadecanoyl-sn-glycero-3-phospho-(1'-sn-glycerol) + (9Z)-octadecenoate + H(+). It carries out the reaction a 1,2-diacyl-sn-glycero-3-phospho-(1'-sn-glycerol) + H2O = 2-acyl-sn-glycero-3-phospho-(1'-sn-glycerol) + a fatty acid + H(+). The enzyme catalyses 1-hexadecanoyl-2-(9Z-octadecenoyl)-sn-glycero-3-phospho-(1'-sn-glycerol) + H2O = 2-(9Z-octadecenoyl)-sn-glycero-3-phospho-(1'-sn-glycerol) + hexadecanoate + H(+). With respect to regulation, phospholipase sn-2 versus sn-1 positional specificity is affected by the phospholipid composition of membranes. Phospholipase A2 activity toward 1-hexadecanoyl-2-(5Z,8Z,11Z,14Z-eicosatetraenoyl)-sn-glycero-3-phosphocholine (PAPE) is enhanced in the presence of 1,2-dioleoyl-sn-glycero-3-phosphocholine (DOPC), which promotes lipid bilayer formation. O-acyltransferase activity is inhibited by antiarrhythmic drug amiodarone. In terms of biological role, has dual calcium-independent phospholipase and O-acyltransferase activities with a potential role in glycerophospholipid homeostasis and remodeling of acyl groups of lipophilic alcohols present in acidic cellular compartments. Catalyzes hydrolysis of the ester bond of the fatty acyl group attached at sn-1 or sn-2 position of phospholipids (phospholipase A1 or A2 activity) and transfer it to the hydroxyl group at the first carbon of lipophilic alcohols (O-acyltransferase activity). Among preferred fatty acyl donors are phosphatidylcholines, phosphatidylethanolamines, phosphatidylglycerols and phosphatidylserines. Favors sn-2 over sn-1 deacylation of unsaturated fatty acyl groups of phosphatidylcholines, phosphatidylethanolamines, and phosphatidylglycerols. Among preferred fatty acyl acceptors are natural lipophilic alcohols including short-chain ceramide N-acetyl-sphingosine (C2 ceramide), alkylacylglycerols, monoacylglycerols, and acylethanolamides such as anandamide and oleoylethanolamide. Selectively hydrolyzes the sn-1 fatty acyl group of truncated oxidized phospholipids and may play a role in detoxification of reactive oxidized phospholipids during oxidative stress. Required for normal phospholipid degradation in alveolar macrophages with potential implications in the clearance of pulmonary surfactant, which is mainly composed of dipalmitoylphosphatidylcholine (1,2-dihexadecanoyl-sn-glycero-3-phosphocholine). Involved in the first step of bis(monoacylglycero)phosphate (BMP) de novo synthesis from phosphatidylglycerol (1,2-diacyl-sn-glycero-3-phospho-(1'-sn-glycerol), PG). BMP is an important player in cargo sorting and degradation, regulation of cellular cholesterol levels and intercellular communication. At neutral pH, hydrolyzes the sn-1 fatty acyl group of the lysophosphatidylcholines. The chain is Lysosomal phospholipase A and acyltransferase from Mus musculus (Mouse).